The primary structure comprises 427 residues: MADKKKRKRSKDDEAEELPFKSILESDDVITELLKSYISSSIKAAAGAGGASSSSSKPLTLADLSLSSSCREVADLSLSSVQTEIETVIVQIARSILAGDGFSFSVPSRAASNQLYVPELDRIVLKDKSTLRPFASVSSVRKTTITTRILALIHQLCLRNIHVTKRDLFYTDVKLFQDQTQSDAVLDDVSCMLGCTRSSLNVIAAEKGVVVGRLIFSDNGDMIDCTKMGMGGKAIPPNIDRVGDMQSDAMFILLVEKDAAYMRLAEDRFYNRFPCIIVTAKGQPDVATRLFLRKMKMELKLPVLALVDSDPYGLKILSVYGCGSKNMSYDSANLTTPDIKWLGIRPSDLDKYKIPEQCRLPMTEQDIKTGKDMLEEDFVKKNPGWVEELNLMVKTKQKAEIQALSSFGFQYLSEVYLPLKLQQQDWL.

Residues 76-209 (LSLSSVQTEI…LNVIAAEKGV (134 aa)) form the Topo IIA-type catalytic domain. The O-(5'-phospho-DNA)-tyrosine intermediate role is filled by Y170. 2 residues coordinate Mg(2+): E256 and D308.

This sequence belongs to the TOP6A family. Homodimer. Heterotetramer of two TOP6A and two TOP6B subunits. Interacts with BIN4 and RHL1. Mg(2+) serves as cofactor. As to expression, highly expressed in leaves, stems, flowers and seedlings.

Its subcellular location is the nucleus. The catalysed reaction is ATP-dependent breakage, passage and rejoining of double-stranded DNA.. In terms of biological role, component of the DNA topoisomerase VI involved in chromatin organization and progression of endoreduplication cycles. Relaxes both positive and negative superturns and exhibits a strong decatenase activity. Involved in cell-elongation processes. This chain is DNA topoisomerase 6 subunit A, found in Arabidopsis thaliana (Mouse-ear cress).